The chain runs to 166 residues: D-aminoacyl-tRNA deacylase (166 aa).

A Gly-cisPro motif, important for rejection of L-amino acids motif is present at residues 142 to 143 (GP).

Belongs to the DTD family. In terms of assembly, homodimer.

It is found in the cytoplasm. It catalyses the reaction glycyl-tRNA(Ala) + H2O = tRNA(Ala) + glycine + H(+). It carries out the reaction a D-aminoacyl-tRNA + H2O = a tRNA + a D-alpha-amino acid + H(+). Functionally, an aminoacyl-tRNA editing enzyme that deacylates mischarged D-aminoacyl-tRNAs. Also deacylates mischarged glycyl-tRNA(Ala), protecting cells against glycine mischarging by AlaRS. Acts via tRNA-based rather than protein-based catalysis; rejects L-amino acids rather than detecting D-amino acids in the active site. By recycling D-aminoacyl-tRNA to D-amino acids and free tRNA molecules, this enzyme counteracts the toxicity associated with the formation of D-aminoacyl-tRNA entities in vivo and helps enforce protein L-homochirality. The polypeptide is D-aminoacyl-tRNA deacylase (Ralstonia nicotianae (strain ATCC BAA-1114 / GMI1000) (Ralstonia solanacearum)).